Consider the following 85-residue polypeptide: Large ribosomal subunit protein bL27 (85 aa).

The segment at 1 to 20 (MATKKAGGSTRNGRDSEAKR) is disordered.

Belongs to the bacterial ribosomal protein bL27 family.

The sequence is that of Large ribosomal subunit protein bL27 from Haemophilus influenzae (strain ATCC 51907 / DSM 11121 / KW20 / Rd).